Here is an 808-residue protein sequence, read N- to C-terminus: Sucrose synthase (808 aa).

The GT-B glycosyltransferase stretch occupies residues 271-753 (MLFRIALISP…GIERVYSTYT (483 aa)).

Belongs to the glycosyltransferase 1 family. As to quaternary structure, probably a homotetramer.

It carries out the reaction an NDP-alpha-D-glucose + D-fructose = a ribonucleoside 5'-diphosphate + sucrose + H(+). The enzyme catalyses ADP-alpha-D-glucose + D-fructose = sucrose + ADP + H(+). Functionally, catalyzes the reversible conversion of sucrose and a nucleotide disphosphate (NDP) into fructose and NDP-glucose; although the reaction is freely reversible in vitro, the physiological reaction seems to be sucrose cleavage. Unlike characterized plant enzymes prefers ADP as a cosubstrate, whereas plants prefer UDP. Its preference for ADP over UDP suggests it may directly link sucrose and glycogen metabolism. The protein is Sucrose synthase of Thermosynechococcus vestitus (strain NIES-2133 / IAM M-273 / BP-1).